The primary structure comprises 263 residues: 3-methyl-2-oxobutanoate hydroxymethyltransferase (263 aa).

2 residues coordinate Mg(2+): D43 and D82. 3-methyl-2-oxobutanoate-binding positions include 43-44 (DS), D82, and K111. Position 113 (E113) interacts with Mg(2+). E179 (proton acceptor) is an active-site residue.

The protein belongs to the PanB family. As to quaternary structure, homodecamer; pentamer of dimers. Mg(2+) is required as a cofactor.

It is found in the cytoplasm. The catalysed reaction is 3-methyl-2-oxobutanoate + (6R)-5,10-methylene-5,6,7,8-tetrahydrofolate + H2O = 2-dehydropantoate + (6S)-5,6,7,8-tetrahydrofolate. Its pathway is cofactor biosynthesis; (R)-pantothenate biosynthesis; (R)-pantoate from 3-methyl-2-oxobutanoate: step 1/2. Functionally, catalyzes the reversible reaction in which hydroxymethyl group from 5,10-methylenetetrahydrofolate is transferred onto alpha-ketoisovalerate to form ketopantoate. The sequence is that of 3-methyl-2-oxobutanoate hydroxymethyltransferase from Neisseria meningitidis serogroup A / serotype 4A (strain DSM 15465 / Z2491).